A 900-amino-acid chain; its full sequence is Alanine--tRNA ligase (900 aa).

Zn(2+) contacts are provided by H567, H571, C671, and H675.

It belongs to the class-II aminoacyl-tRNA synthetase family. Requires Zn(2+) as cofactor.

The protein localises to the cytoplasm. The catalysed reaction is tRNA(Ala) + L-alanine + ATP = L-alanyl-tRNA(Ala) + AMP + diphosphate. Catalyzes the attachment of alanine to tRNA(Ala) in a two-step reaction: alanine is first activated by ATP to form Ala-AMP and then transferred to the acceptor end of tRNA(Ala). Also edits incorrectly charged Ser-tRNA(Ala) and Gly-tRNA(Ala) via its editing domain. This is Alanine--tRNA ligase from Mycoplasma pneumoniae (strain ATCC 29342 / M129 / Subtype 1) (Mycoplasmoides pneumoniae).